The primary structure comprises 184 residues: ATP synthase subunit b, chloroplastic (184 aa).

The helical transmembrane segment at 27-49 (LATNPINLSVVFGVLIFFGKGVL) threads the bilayer.

This sequence belongs to the ATPase B chain family. In terms of assembly, F-type ATPases have 2 components, F(1) - the catalytic core - and F(0) - the membrane proton channel. F(1) has five subunits: alpha(3), beta(3), gamma(1), delta(1), epsilon(1). F(0) has four main subunits: a(1), b(1), b'(1) and c(10-14). The alpha and beta chains form an alternating ring which encloses part of the gamma chain. F(1) is attached to F(0) by a central stalk formed by the gamma and epsilon chains, while a peripheral stalk is formed by the delta, b and b' chains.

The protein localises to the plastid. It is found in the chloroplast thylakoid membrane. Its function is as follows. F(1)F(0) ATP synthase produces ATP from ADP in the presence of a proton or sodium gradient. F-type ATPases consist of two structural domains, F(1) containing the extramembraneous catalytic core and F(0) containing the membrane proton channel, linked together by a central stalk and a peripheral stalk. During catalysis, ATP synthesis in the catalytic domain of F(1) is coupled via a rotary mechanism of the central stalk subunits to proton translocation. Functionally, component of the F(0) channel, it forms part of the peripheral stalk, linking F(1) to F(0). This chain is ATP synthase subunit b, chloroplastic, found in Barbarea verna (Land cress).